We begin with the raw amino-acid sequence, 538 residues long: SWM histone demethylase complex subunit phf2 (538 aa).

3 disordered regions span residues 28-47 (RFPN…NQNG), 98-150 (EIES…SSPL), and 198-222 (TKSG…RRRG). The span at 98-111 (EIESSKNQETDAKS) shows a compositional bias: basic and acidic residues. Residues 232 to 288 (AMKCSVCQRLQSPPKNRIVFCDGCNTPFHQLCHEPYISDELLDSPNGEWFCDDCIRR) form a PHD-type zinc finger. Residues 367-392 (GDQYLSLNNGTESQSKTTKHSTSLPS) show a composition bias toward polar residues. The segment at 367–396 (GDQYLSLNNGTESQSKTTKHSTSLPSTEPV) is disordered.

In terms of assembly, component of the SWM histone demethylase complex composed of at least lsd1, lsd2, phf1 and phf2.

It is found in the nucleus. Functionally, component of the SWM histone demethylase complex that specifically demethylates H3K9me2, a specific tag for epigenetic transcriptional activation, thereby acting as a corepressor. Has a role in regulating heterochromatin propagation and euchromatic transcription. The polypeptide is SWM histone demethylase complex subunit phf2 (phf2) (Schizosaccharomyces pombe (strain 972 / ATCC 24843) (Fission yeast)).